A 155-amino-acid chain; its full sequence is Small ribosomal subunit protein uS17 (155 aa).

Alanine 2 carries the post-translational modification N-acetylalanine.

It belongs to the universal ribosomal protein uS17 family.

The chain is Small ribosomal subunit protein uS17 from Drosophila pseudoobscura pseudoobscura (Fruit fly).